Consider the following 671-residue polypeptide: Acetyl-coenzyme A synthetase 2 (671 aa).

CoA-binding positions include 207-210 and T326; that span reads RGGR. ATP-binding positions include 402 to 404, 426 to 431, D517, and R532; these read GEP and DTYWQT. S540 is a binding site for CoA. R543 contributes to the ATP binding site. A CoA-binding site is contributed by R603.

Belongs to the ATP-dependent AMP-binding enzyme family.

It carries out the reaction acetate + ATP + CoA = acetyl-CoA + AMP + diphosphate. The protein is Acetyl-coenzyme A synthetase 2 (ACS2) of Candida albicans (strain SC5314 / ATCC MYA-2876) (Yeast).